A 243-amino-acid polypeptide reads, in one-letter code: Transmembrane protein 174 (243 aa).

The next 2 helical transmembrane spans lie at 40 to 60 (LLFS…MGWI) and 73 to 93 (LLGP…VCKF).

In terms of assembly, interacts with SLC34A1; regulates SLC34A1 internalization by PTH and FGF23. As to expression, predominantly expressed in kidney. Selectively localized in the apical membrane of renal proximal tubule epithelial cells.

The protein localises to the endoplasmic reticulum membrane. It localises to the apical cell membrane. Functionally, regulator of plasma phosphate homeostasis. Decreases serum inorganic phosphate (Pi) uptake by regulating the sodium-phosphate cotransporter SLC34A1 trafficking by PTH and FGF23 in the kidney. The chain is Transmembrane protein 174 (TMEM174) from Homo sapiens (Human).